The following is an 855-amino-acid chain: MKIAVVDKALNNTRYDKHFQLYGEEVDVFHMCNEKLSGRLLKKHITIGTPENPFDPNDYDFVILVGAEPFLYFAGKKGIGDYTGKRVEYNGYANWIASISPAQLHFKPEMKPVFDATVENIHDIINGREKIAKAGDYRPITDPDEAEEYIKMVYNMVIGPVAFDSETSALYCRDGYLLGVSISHQEYQGVYIDSDCLTEVAVYYLQKILDSENHTIVFHNLKFDMHFYKYHLGLTFDKAHKERRLHDTMLQHYVLDERRGTHGLKSLAMKYTDMGDYDFELDKFKDDYCKAHKIKKEDFTYDLIPFDIMWPYAAKDTDATIRLHNFFLPKIEKNEKLCSLYYDVLMPGCVFLQRVEDRGVPISIDRLKEAQYQLTHNLNKAREKLYTYPEVKQLEQDQNEAFNPNSVKQLRVLLFDYVGLTPTGKLTDTGADSTDAEALNELATQHPIAKTLLEIRKLTKLISTYVEKILLSIDADGCIRTGFHEHMTTSGRLSSSGKLNLQQLPRDESIIKGCVVAPPGYRVIAWDLTTAEVYYAAVLSGDRNMQQVFINMRNEPDKYPDFHSNIAHMVFKLQCEPRDVKKLFPALRQAAKAITFGILYGSGPAKVAHSVNEALLEQAAKTGEPFVECTVADAKEYIETYFGQFPQLKRWIDKCHDQIKNHGFIYSHFGRKRRLHNIHSEDRGVQGEEIRSGFNAIIQSASSDSLLLGAVDADNEIISLGLEQEMKIVMLVHDSVVAIVREDLIDQYNEILIRNIQKDRGISIPGCPIGIDSDSEAGGSRDYSCGKMKKQHPSIACIDDDEYTRYVKGVLLDAEFEYKKLAAMDKEHPDHSKYKDDKFIAVCKDLDNVKRILGA.

In terms of domain architecture, 3'-5' exonuclease spans 107 to 332 (KPEMKPVFDA…LHNFFLPKIE (226 aa)). Residues 333-833 (KNEKLCSLYY…MDKEHPDHSK (501 aa)) form a polymerase region.

It belongs to the DNA polymerase type-A family. In terms of assembly, single-chain monomer with multiple functions.

It catalyses the reaction DNA(n) + a 2'-deoxyribonucleoside 5'-triphosphate = DNA(n+1) + diphosphate. In terms of biological role, replicates the viral genomic DNA. This polymerase possesses two enzymatic activities: DNA synthesis (polymerase) and an exonucleolytic activity that degrades single-stranded DNA in the 3'-5' direction for proofreading purpose. The DNA synthesis very likely occurs by strand displacement. This chain is DNA polymerase, found in Escherichia phage T5 (Enterobacteria phage T5).